The sequence spans 250 residues: Tetrahydromethanopterin S-methyltransferase subunit D (250 aa).

The next 6 membrane-spanning stretches (helical) occupy residues 9–29 (IIWMALITIGGVLISWSVHFV), 47–67 (GTVQLAAGAGLTGLVSAGFMM), 86–106 (IMIAVTMIVGSIVYVYGVGVV), 144–164 (IIGGGLGGIGGSLVYYSLIEV), 184–204 (LVAVAAIFAIGIFFVNAVIPS), and 230–250 (LVASIMCAIVAVVAIAQLGGI).

It belongs to the MtrD family. In terms of assembly, the complex is composed of 8 subunits; MtrA, MtrB, MtrC, MtrD, MtrE, MtrF, MtrG and MtrH.

The protein localises to the cell membrane. It catalyses the reaction 5-methyl-5,6,7,8-tetrahydromethanopterin + coenzyme M + 2 Na(+)(in) = 5,6,7,8-tetrahydromethanopterin + methyl-coenzyme M + 2 Na(+)(out). The protein operates within one-carbon metabolism; methanogenesis from CO(2); methyl-coenzyme M from 5,10-methylene-5,6,7,8-tetrahydromethanopterin: step 2/2. Functionally, part of a complex that catalyzes the formation of methyl-coenzyme M and tetrahydromethanopterin from coenzyme M and methyl-tetrahydromethanopterin. This is an energy-conserving, sodium-ion translocating step. In Methanosarcina barkeri (strain Fusaro / DSM 804), this protein is Tetrahydromethanopterin S-methyltransferase subunit D.